The primary structure comprises 434 residues: Probable phosphoglucosamine mutase (434 aa).

S91 serves as the catalytic Phosphoserine intermediate. Mg(2+)-binding residues include S91, D229, D231, and D233. Position 91 is a phosphoserine (S91).

Belongs to the phosphohexose mutase family. Mg(2+) serves as cofactor. Post-translationally, activated by phosphorylation.

The enzyme catalyses alpha-D-glucosamine 1-phosphate = D-glucosamine 6-phosphate. Catalyzes the conversion of glucosamine-6-phosphate to glucosamine-1-phosphate. This is Probable phosphoglucosamine mutase from Methanosarcina barkeri (strain Fusaro / DSM 804).